The primary structure comprises 549 residues: Cell pattern formation-associated protein StuA (549 aa).

Residues 86-192 (RVTATLWEDE…HNIGALLYHP (107 aa)) form the HTH APSES-type domain. Residues 120-141 (GTKLLNVAGMTRGRRDGILKSE) constitute a DNA-binding region (H-T-H motif). Disordered regions lie at residues 205 to 227 (AERRKHEGLGGQRPPAPNALPSI), 246 to 288 (SLAN…DLHR), 332 to 466 (REED…DHLN), and 514 to 549 (ASTVAASPSYPSAPVYDTAARPPSAISAPRRQQSFG). A compositionally biased stretch (polar residues) spans 246-266 (SLANGPQSLASTPQPLANGSQ). Basic and acidic residues-rich tracts occupy residues 278 to 288 (RGREEEEDLHR), 332 to 346 (REEDDEVHRSAHNAH), and 385 to 395 (RGRDEDDDHRS). Residues 516-545 (TVAASPSYPSAPVYDTAARPPSAISAPRRQ) form a nuclear localization domain region. Positions 532-549 (AARPPSAISAPRRQQSFG) are enriched in low complexity.

The protein belongs to the EFG1/PHD1/stuA family.

It is found in the nucleus. Functionally, transcription factor that regulates asexual reproduction. Binds the StuA-response elements (StRE) with the consensus sequence 5'-(A/T)CGCG(T/A)N(A/C)-3' at the promoters of target genes. In Gibberella moniliformis (strain M3125 / FGSC 7600) (Maize ear and stalk rot fungus), this protein is Cell pattern formation-associated protein StuA.